A 156-amino-acid chain; its full sequence is uncharacterized protein (156 aa).

Disordered stretches follow at residues 22–64 (KERV…VLKK) and 81–156 (AARA…DENE). A compositionally biased stretch (acidic residues) spans 43–56 (PEEDGDHSDKEDEQ). S50 carries the post-translational modification Phosphoserine. The residue at position 108 (K108) is an N6-acetyllysine. Positions 121-134 (TKEEDEINKQDSVK) are enriched in basic and acidic residues. Phosphoserine is present on S148.

This is an uncharacterized protein from Bos taurus (Bovine).